Reading from the N-terminus, the 30-residue chain is L-serine dehydratase, alpha chain (30 aa).

It belongs to the iron-sulfur dependent L-serine dehydratase family. As to quaternary structure, heterodimer of an alpha chain and a beta chain. Requires [4Fe-4S] cluster as cofactor.

The catalysed reaction is L-serine = pyruvate + NH4(+). It functions in the pathway carbohydrate biosynthesis; gluconeogenesis. The sequence is that of L-serine dehydratase, alpha chain from Anaerotignum propionicum (Clostridium propionicum).